Reading from the N-terminus, the 378-residue chain is D-alanine--D-alanine ligase (378 aa).

In terms of domain architecture, ATP-grasp spans 157–368; that stretch reads KVVFESAGLS…YGDLIDELIH (212 aa). 189–244 contributes to the ATP binding site; it reads VDKLGFPVFVKPARAGSSMGISKVDSMEGLDAAIDEARRHDLKLVIEAGIVGREIE. Residues aspartate 322, glutamate 335, and asparagine 337 each coordinate Mg(2+).

It belongs to the D-alanine--D-alanine ligase family. Mg(2+) is required as a cofactor. Mn(2+) serves as cofactor.

It is found in the cytoplasm. It catalyses the reaction 2 D-alanine + ATP = D-alanyl-D-alanine + ADP + phosphate + H(+). It participates in cell wall biogenesis; peptidoglycan biosynthesis. Its function is as follows. Cell wall formation. This chain is D-alanine--D-alanine ligase, found in Paenarthrobacter aurescens (strain TC1).